Consider the following 287-residue polypeptide: Hydroxysteroid 11-beta-dehydrogenase 1-like protein (287 aa).

Residues 1-15 (MKVLLLTGLGALFFA) form the signal peptide. Residues 36–62 (GVSAGIGEELAYHYARLGSHLVLTAHT), 87–88 (DM), and 114–116 (NHL) contribute to the NADP(+) site. Ser165 contacts substrate. The active-site Proton acceptor is the Tyr178. Residues 178–182 (YSAAK) and 211–217 (GLRDRAS) each bind NADP(+). A glycan (N-linked (GlcNAc...) asparagine) is linked at Asn280.

This sequence belongs to the short-chain dehydrogenases/reductases (SDR) family.

It is found in the secreted. The enzyme catalyses cortisone + NADPH + H(+) = cortisol + NADP(+). In terms of biological role, unidirectional NADP(+)-dependent cortisol dehydrogenase (in vitro). The sequence is that of Hydroxysteroid 11-beta-dehydrogenase 1-like protein (HSD11B1L) from Bos taurus (Bovine).